Consider the following 390-residue polypeptide: Putative gustatory receptor 36c (390 aa).

The Cytoplasmic portion of the chain corresponds to 1 to 4; that stretch reads MDLE. Residues 5 to 25 form a helical membrane-spanning segment; the sequence is SFLLGAVYYYGLFIGLSNFEF. Topologically, residues 26 to 36 are extracellular; it reads DWNTGRVFTKK. A helical transmembrane segment spans residues 37 to 57; that stretch reads WSTLYAIALDSCIFALYIYHW. At 58–75 the chain is on the cytoplasmic side; sequence TGNTNIVNAIFGRANMLH. Residues 76–96 traverse the membrane as a helical segment; sequence EYVVAILTGLRIVTGLFTLIL. The Extracellular segment spans residues 97–132; sequence RWYQRCKMMDLASKVVRMYVARPQVRRMSRWGILTK. The chain crosses the membrane as a helical span at residues 133–153; that stretch reads FIFGSITDGLQMAMVLSAMGS. Topologically, residues 154-165 are cytoplasmic; sequence VDSQFYLGLGLQ. A helical membrane pass occupies residues 166–186; it reads YWMFVILNMAMMQQHMIMLFV. Residues 187 to 254 are Extracellular-facing; that stretch reads RTQFQLINTE…MEEVFGIQGA (68 aa). Residues 255 to 275 traverse the membrane as a helical segment; sequence MTYGGYYLSSVGTCYLAYSIL. Residues 276–288 lie on the Cytoplasmic side of the membrane; that stretch reads KHGYENLSMTLST. A helical transmembrane segment spans residues 289–309; that stretch reads VILAYSWCFFYYLDGMLNLSV. Topologically, residues 310 to 390 are extracellular; that stretch reads MLHVQDDYWE…FLIQYDIEHF (81 aa).

It belongs to the insect chemoreceptor superfamily. Gustatory receptor (GR) family. Gr22e subfamily. In terms of tissue distribution, expressed in neurons of the terminal external chemosensory organ of larvae.

It localises to the cell membrane. Functionally, probable gustatory receptor which mediates acceptance or avoidance behavior, depending on its substrates. In Drosophila melanogaster (Fruit fly), this protein is Putative gustatory receptor 36c (Gr36c).